The primary structure comprises 282 residues: Proteasome subunit beta (282 aa).

Positions 1-54 (MGSHRDLPAGMVNHIFTNSGISSFTEFVGSYAPDLLPGRNETLAAPVGDRIPHA) are cleaved as a propeptide — removed in mature form; by autocatalysis. The active-site Nucleophile is T55.

This sequence belongs to the peptidase T1B family. As to quaternary structure, the 20S proteasome core is composed of 14 alpha and 14 beta subunits that assemble into four stacked heptameric rings, resulting in a barrel-shaped structure. The two inner rings, each composed of seven catalytic beta subunits, are sandwiched by two outer rings, each composed of seven alpha subunits. The catalytic chamber with the active sites is on the inside of the barrel. Has a gated structure, the ends of the cylinder being occluded by the N-termini of the alpha-subunits. Is capped by the proteasome-associated ATPase, ARC.

It is found in the cytoplasm. The catalysed reaction is Cleavage of peptide bonds with very broad specificity.. It functions in the pathway protein degradation; proteasomal Pup-dependent pathway. Its activity is regulated as follows. The formation of the proteasomal ATPase ARC-20S proteasome complex, likely via the docking of the C-termini of ARC into the intersubunit pockets in the alpha-rings, may trigger opening of the gate for substrate entry. Interconversion between the open-gate and close-gate conformations leads to a dynamic regulation of the 20S proteasome proteolysis activity. In terms of biological role, component of the proteasome core, a large protease complex with broad specificity involved in protein degradation. In Streptosporangium roseum (strain ATCC 12428 / DSM 43021 / JCM 3005 / KCTC 9067 / NCIMB 10171 / NRRL 2505 / NI 9100), this protein is Proteasome subunit beta.